The chain runs to 128 residues: Protein yippee-like At3g08990 (128 aa).

A Yippee domain is found at L12 to Y109. Zn(2+)-binding residues include C16, C19, C72, and C75.

Belongs to the yippee family.

The polypeptide is Protein yippee-like At3g08990 (Arabidopsis thaliana (Mouse-ear cress)).